We begin with the raw amino-acid sequence, 89 residues long: Dynein light chain 2, cytoplasmic (89 aa).

This sequence belongs to the dynein light chain family. In terms of assembly, homodimer. The cytoplasmic dynein 1 complex consists of two catalytic heavy chains (HCs) and a number of non-catalytic subunits which present intermediate chains (ICs), light intermediate chains (LICs) and light chains (LCs); the composition seems to vary in respect to the IC, LIC and LC composition. The heavy chain homodimer serves as a scaffold for the probable homodimeric assembly of the respective non-catalytic subunits. Dynein ICs and LICs bind directly to the HC dimer and the LCs assemble on the IC dimer. Interacts with DYNC1I1. Interacts with BMF. Component of the myosin V motor complex. Interacts with BCAS1. Interacts with Basson/BSN. Interacts with AMBRA1 (via TQT motifs); tethering AMBRA1 to the cytoskeleton. Interacts with IQUB.

The protein localises to the cytoplasm. Its subcellular location is the cytoskeleton. Acts as one of several non-catalytic accessory components of the cytoplasmic dynein 1 complex that are thought to be involved in linking dynein to cargos and to adapter proteins that regulate dynein function. Cytoplasmic dynein 1 acts as a motor for the intracellular retrograde motility of vesicles and organelles along microtubules. May play a role in changing or maintaining the spatial distribution of cytoskeletal structures. The chain is Dynein light chain 2, cytoplasmic (DYNLL2) from Homo sapiens (Human).